The sequence spans 127 residues: Cold-regulated protein 1 (127 aa).

The interval 39-127 (ARGPPPSPAP…WTRPRMARAR (89 aa)) is disordered. A compositionally biased stretch (basic residues) spans 85-101 (SRRRRRRRATRRARSRM). Positions 102–121 (PRTTPWRAPRAPARAWWTRP) are enriched in low complexity.

The chain is Cold-regulated protein 1 from Hordeum vulgare (Barley).